Reading from the N-terminus, the 236-residue chain is tRNA (guanine-N(7)-)-methyltransferase (236 aa).

Residues Gly54, 77–78 (EI), 110–111 (NA), and Leu130 contribute to the S-adenosyl-L-methionine site. Asp133 is an active-site residue. Residue 208–210 (TEE) coordinates S-adenosyl-L-methionine.

Belongs to the class I-like SAM-binding methyltransferase superfamily. TrmB family.

It is found in the nucleus. It carries out the reaction guanosine(46) in tRNA + S-adenosyl-L-methionine = N(7)-methylguanosine(46) in tRNA + S-adenosyl-L-homocysteine. Its pathway is tRNA modification; N(7)-methylguanine-tRNA biosynthesis. In terms of biological role, catalyzes the formation of N(7)-methylguanine at position 46 (m7G46) in tRNA. The chain is tRNA (guanine-N(7)-)-methyltransferase from Bombyx mori (Silk moth).